The following is a 1577-amino-acid chain: Vacuolar protein sorting/targeting protein PEP1 (1577 aa).

A signal peptide spans 1–21 (MILLHFVYSLWALLLIPLINA). Residues 22-1391 (EEFTPKVTKT…EFKEKYSVSA (1370 aa)) are Lumenal-facing. 2 BNR repeats span residues 58–68 (ISFDDGETWEK) and 101–111 (YITNDQGKSWE). 2 N-linked (GlcNAc...) asparagine glycosylation sites follow: Asn121 and Asn168. BNR repeat units follow at residues 179-187 (SNDGGKSFS) and 414-423 (ISVDNGLTWT). A glycan (N-linked (GlcNAc...) asparagine) is linked at Asn445. BNR repeat units follow at residues 485 to 495 (FISRDGGLTWK), 531 to 541 (YYSLDQGKTWT), and 762 to 771 (YISHDGGQTI). N-linked (GlcNAc...) asparagine glycosylation occurs at Asn791. One copy of the BNR 8 repeat lies at 859-869 (YLTNDGGETFT). N-linked (GlcNAc...) asparagine glycosylation is present at Asn1008. BNR repeat units lie at residues 1141–1150 (FFTTDGGETW) and 1183–1192 (YSTDFGKTWK). Asn1301 carries N-linked (GlcNAc...) asparagine glycosylation. A helical membrane pass occupies residues 1392–1412 (GPFAFIFISILLIIFFAAWFV). At 1413 to 1577 (YDRGIRRNGG…DSTAPSNENQ (165 aa)) the chain is on the cytoplasmic side. Positions 1531-1577 (DDVPTLEEEHTSYTDQPTTTDVPDALPEGNEENIDRPDSTAPSNENQ) are disordered.

It belongs to the VPS10-related sortilin family.

It localises to the golgi apparatus. It is found in the trans-Golgi network membrane. The protein resides in the prevacuolar compartment membrane. Functionally, functions as a sorting receptor in the Golgi compartment required for the intracellular sorting and delivery of soluble vacuolar proteins, like carboxypeptidase Y (CPY) and proteinase A. Executes multiple rounds of sorting by cycling between the late Golgi and a prevacuolar endosome-like compartment. Binds the Golgi-modified P2 form of CPY, and this interaction is dependent on the presence of an intact CPY vacuolar protein sorting signal. The polypeptide is Vacuolar protein sorting/targeting protein PEP1 (PEP1) (Saccharomyces cerevisiae (strain JAY291) (Baker's yeast)).